Consider the following 124-residue polypeptide: MPTIQQLIRFERKQIVGTSKSAALESCPQKKGVCTKVYTTTPKKPNSALRKVARVRLTSGFEITAYIPGIGHNLQEHSVVLIRGGRVKDLPGVRYHIIRGALDSTGVKNRLRARSKYGASKPKK.

Belongs to the universal ribosomal protein uS12 family. As to quaternary structure, part of the 30S ribosomal subunit.

It localises to the plastid. The protein resides in the chloroplast. Functionally, with S4 and S5 plays an important role in translational accuracy. Located at the interface of the 30S and 50S subunits. The sequence is that of Small ribosomal subunit protein uS12c (rps12) from Cyanidium caldarium (Red alga).